Consider the following 332-residue polypeptide: Endo-1,4-beta-xylanase (332 aa).

Residues 1–21 form the signal peptide; that stretch reads MLSSTTLLAILSALALTSVQA. Residues 26-316 form the GH10 domain; it reads KNSLDYLANK…KSTYYVVQQA (291 aa). Glutamate 120 (proton donor) is an active-site residue. A disulfide bridge connects residues cysteine 128 and cysteine 160. Glutamate 214 (nucleophile) is an active-site residue. A disulfide bond links cysteine 247 and cysteine 253.

Belongs to the glycosyl hydrolase 10 (cellulase F) family.

Its subcellular location is the secreted. The enzyme catalyses Endohydrolysis of (1-&gt;4)-beta-D-xylosidic linkages in xylans.. In terms of biological role, requires at least three xylose residues for catalytic activity. Does not have activity against xylobiose. This chain is Endo-1,4-beta-xylanase, found in Naganishia albida (Cryptococcus albidus).